A 387-amino-acid polypeptide reads, in one-letter code: Dual-specificity RNA methyltransferase RlmN (387 aa).

Glu110 serves as the catalytic Proton acceptor. Positions 117 to 349 (VGKAGALCVS…NRAGYASPIR (233 aa)) constitute a Radical SAM core domain. A disulfide bridge links Cys124 with Cys360. [4Fe-4S] cluster contacts are provided by Cys131, Cys135, and Cys138. S-adenosyl-L-methionine contacts are provided by residues 186–187 (GE), Ser218, 240–242 (SLH), and Asn317. Cys360 acts as the S-methylcysteine intermediate in catalysis.

The protein belongs to the radical SAM superfamily. RlmN family. It depends on [4Fe-4S] cluster as a cofactor.

The protein localises to the cytoplasm. It catalyses the reaction adenosine(2503) in 23S rRNA + 2 reduced [2Fe-2S]-[ferredoxin] + 2 S-adenosyl-L-methionine = 2-methyladenosine(2503) in 23S rRNA + 5'-deoxyadenosine + L-methionine + 2 oxidized [2Fe-2S]-[ferredoxin] + S-adenosyl-L-homocysteine. The catalysed reaction is adenosine(37) in tRNA + 2 reduced [2Fe-2S]-[ferredoxin] + 2 S-adenosyl-L-methionine = 2-methyladenosine(37) in tRNA + 5'-deoxyadenosine + L-methionine + 2 oxidized [2Fe-2S]-[ferredoxin] + S-adenosyl-L-homocysteine. Specifically methylates position 2 of adenine 2503 in 23S rRNA and position 2 of adenine 37 in tRNAs. m2A2503 modification seems to play a crucial role in the proofreading step occurring at the peptidyl transferase center and thus would serve to optimize ribosomal fidelity. This is Dual-specificity RNA methyltransferase RlmN from Hyphomonas neptunium (strain ATCC 15444).